The following is a 338-amino-acid chain: MVVMAPRTLFLLLSGALTLTETWAGSHSMRYFSAAVSRPGRGEPRFIAMGYVDDTQFVWFDSDSACPRMEPRAPWVEQEGPEYWEEETRNTKAHAQTDRINLQTLRGYYNQSEASSHTLQWMIGCDLGSDGRLLRGYEQYAYDGKDYLALNEDLRSWTAADTAAQISKRKCEAANAAEQRRAYLEGTCVEWLHRYLENGKEMLQRADPPKTHVTHHPVFDYEATLRCWALGFYPAEIILTWQRDGEDQTQDVELVETRPAGDGTFQKWAAVVVPSGEEQRYTCHVQHEGLPEPLMLRWKQSSLPTIPIMGIVAGLVVLAAVVTGAAVAAVLWRKKSSD.

An N-terminal signal peptide occupies residues 1–24 (MVVMAPRTLFLLLSGALTLTETWA). An alpha-1 region spans residues 25 to 114 (GSHSMRYFSA…LRGYYNQSEA (90 aa)). At 25 to 308 (GSHSMRYFSA…KQSSLPTIPI (284 aa)) the chain is on the extracellular side. N-linked (GlcNAc...) asparagine glycosylation is present at Asn110. The segment at 115–206 (SSHTLQWMIG…ENGKEMLQRA (92 aa)) is alpha-2. Disulfide bonds link Cys125–Cys188 and Cys227–Cys283. An alpha-3 region spans residues 207 to 298 (DPPKTHVTHH…GLPEPLMLRW (92 aa)). Positions 209 to 299 (PKTHVTHHPV…LPEPLMLRWK (91 aa)) constitute an Ig-like C1-type domain. The tract at residues 299–308 (KQSSLPTIPI) is connecting peptide. Residues 309–332 (MGIVAGLVVLAAVVTGAAVAAVLW) traverse the membrane as a helical segment. Residues 333 to 338 (RKKSSD) lie on the Cytoplasmic side of the membrane.

It belongs to the MHC class I family. As to quaternary structure, heterodimer of an alpha chain and a beta chain (beta-2-microglobulin). Homodimer; disulfide-linked. Binds to LILRB1 and LILRB2.

The protein resides in the cell membrane. Functionally, involved in the presentation of foreign antigens to the immune system. In Pan troglodytes (Chimpanzee), this protein is Patr class I histocompatibility antigen, alpha chain G (Patr-G).